The sequence spans 192 residues: Thymidine kinase (192 aa).

ATP-binding positions include 9-16 (SAMNAGKS) and 87-90 (DECQ). Glutamate 88 functions as the Proton acceptor in the catalytic mechanism. 4 residues coordinate Zn(2+): cysteine 145, cysteine 147, cysteine 182, and histidine 185.

The protein belongs to the thymidine kinase family. In terms of assembly, homotetramer.

The protein resides in the cytoplasm. It catalyses the reaction thymidine + ATP = dTMP + ADP + H(+). The polypeptide is Thymidine kinase (Photobacterium profundum (strain SS9)).